The primary structure comprises 352 residues: MTSRETRAADAAGARQADAQVRSSIDVPPDLVVGLLGSADENLRALERTLSADLHVRGNAVTLCGEPADVALAERVISELIAIVASGQSLTPEVVRHSVAMLVGTGNESPAEVLTLDILSRRGKTIRPKTLNQKRYVDAIDANTIVFGIGPAGTGKTYLAMAKAVHALQTKQVTRIILTRPAVEAGERLGFLPGTLSEKIDPYLRPLYDALYDMMDPELIPKLMSAGVIEVAPLAYMRGRTLNDAFIVLDEAQNTTAEQMKMFLTRLGFGSKVVVTGDVTQIDLPGGARSGLRAAVDILEDIDDIHIAELTSVDVVRHRLVSEIVDAYARYEEPGSGLNRAARRASGARGRR.

Residues M1 to V21 form a disordered region. Over residues A9–Q20 the composition is skewed to low complexity. ATP is bound at residue G150 to T157.

Belongs to the PhoH family.

The protein resides in the cytoplasm. In Mycobacterium bovis (strain ATCC BAA-935 / AF2122/97), this protein is PhoH-like protein.